The primary structure comprises 429 residues: Enolase (429 aa).

Residue Gln163 coordinates (2R)-2-phosphoglycerate. Catalysis depends on Glu205, which acts as the Proton donor. The Mg(2+) site is built by Asp242, Glu286, and Asp313. Residues Lys338, Arg367, Ser368, and Lys389 each coordinate (2R)-2-phosphoglycerate. The active-site Proton acceptor is Lys338.

This sequence belongs to the enolase family. It depends on Mg(2+) as a cofactor.

The protein localises to the cytoplasm. It localises to the secreted. Its subcellular location is the cell surface. It catalyses the reaction (2R)-2-phosphoglycerate = phosphoenolpyruvate + H2O. It functions in the pathway carbohydrate degradation; glycolysis; pyruvate from D-glyceraldehyde 3-phosphate: step 4/5. In terms of biological role, catalyzes the reversible conversion of 2-phosphoglycerate (2-PG) into phosphoenolpyruvate (PEP). It is essential for the degradation of carbohydrates via glycolysis. The polypeptide is Enolase (Thermoanaerobacter sp. (strain X514)).